Here is a 125-residue protein sequence, read N- to C-terminus: PCNA-associated factor (125 aa).

The disordered stretch occupies residues 1–125 (MVRTKADSAG…SEEAADSDDE (125 aa)). The segment covering 8–17 (SAGSSASSGS) has biased composition (low complexity). The short motif at 28–39 (RKTFGSSSSGSN) is the D-box element. A PIP-box motif is present at residues 68–79 (QKGIGEFFGSPS). The KEN box motif lies at 85–87 (KEN). The Initiation motif motif lies at 95–107 (EAGGSGAGKAPRK). Acidic residues predominate over residues 115-125 (PSEEAADSDDE).

In terms of assembly, interacts with pcna.

The protein localises to the nucleus. The protein resides in the cytoplasm. It localises to the perinuclear region. PCNA-binding protein that acts as a regulator of DNA repair during DNA replication. Following DNA damage, the interaction with pcna is disrupted, facilitating the interaction between monoubiquitinated pcna and the translesion DNA synthesis DNA polymerase eta (polh) at stalled replisomes, facilitating the bypass of replication-fork-blocking lesions. Also acts as a regulator of centrosome number. This is PCNA-associated factor from Xenopus tropicalis (Western clawed frog).